The chain runs to 304 residues: Eukaryotic translation initiation factor 2 subunit alpha (304 aa).

Positions 17 to 88 (DDIVMVNVQQ…EKGYIDLSKR (72 aa)) constitute an S1 motif domain. Ser-52 carries the phosphoserine; by GCN2 modification. The disordered stretch occupies residues 283 to 304 (LESKELDNRSDSEDDEDESDDE). Residues 284–293 (ESKELDNRSD) show a composition bias toward basic and acidic residues. A phosphoserine mark is found at Ser-292 and Ser-294. A compositionally biased stretch (acidic residues) spans 294-304 (SEDDEDESDDE).

This sequence belongs to the eIF-2-alpha family. As to quaternary structure, eukaryotic translation initiation factor 2 eIF2 is a heterotrimeric complex composed of an alpha, a beta and a gamma subunit. The factors eIF-1, eIF-2, eIF-3, TIF5/eIF-5 and methionyl-tRNAi form a multifactor complex (MFC) that may bind to the 40S ribosome. Interacts with CDC123; the interaction is direct. Interacts with GCD1. Post-translationally, phosphorylated; phosphorylation on Ser-52 by the GCN2 protein kinase occurs in response to low amino acid, carbon, or purine availability. Phosphorylation inhibits the guanine nucleotide exchange factor activity of the eIF2B complex.

It is found in the cytoplasm. The protein resides in the cytosol. EIF-2 functions in the early steps of protein synthesis by forming a ternary complex with GTP and initiator tRNA. This complex binds to a 40S ribosomal subunit, followed by mRNA binding to form a 43S pre-initiation complex. Junction of the 60S ribosomal subunit to form the 80S initiation complex is preceded by hydrolysis of the GTP bound to eIF-2 and release of an eIF-2-GDP binary complex. In order for eIF-2 to recycle and catalyze another round of initiation, the GDP bound to eIF-2 must exchange with GTP by way of a reaction catalyzed by eIF2B. In Saccharomyces cerevisiae (strain ATCC 204508 / S288c) (Baker's yeast), this protein is Eukaryotic translation initiation factor 2 subunit alpha.